The sequence spans 224 residues: Phosphoglycolate phosphatase (224 aa).

The active-site Nucleophile is the D10. Residues D10, D12, and D176 each contribute to the Mg(2+) site.

This sequence belongs to the HAD-like hydrolase superfamily. CbbY/CbbZ/Gph/YieH family. Mg(2+) is required as a cofactor.

It carries out the reaction 2-phosphoglycolate + H2O = glycolate + phosphate. Its pathway is organic acid metabolism; glycolate biosynthesis; glycolate from 2-phosphoglycolate: step 1/1. Functionally, specifically catalyzes the dephosphorylation of 2-phosphoglycolate. Is involved in the dissimilation of the intracellular 2-phosphoglycolate formed during the DNA repair of 3'-phosphoglycolate ends, a major class of DNA lesions induced by oxidative stress. This Pasteurella multocida (strain Pm70) protein is Phosphoglycolate phosphatase.